Here is an 806-residue protein sequence, read N- to C-terminus: 85/88 kDa calcium-independent phospholipase A2 (806 aa).

9 ANK repeats span residues tryptophan 120 to alanine 147, glutamate 151 to valine 181, lysine 185 to glutamine 215, glutamine 219 to isoleucine 248, proline 251 to serine 281, tyrosine 286 to serine 312, alanine 316 to alanine 345, histidine 349 to threonine 378, and phenylalanine 382 to leucine 403. 2 helical membrane-spanning segments follow: residues leucine 480–isoleucine 500 and leucine 511–serine 531. One can recognise a PNPLA domain in the interval leucine 481 to methionine 665. The GXGXXG signature appears at glycine 485–glycine 490. A GXSXG motif is present at residues glycine 517 to glycine 521. Serine 519 functions as the Nucleophile in the catalytic mechanism. Aspartate 652 serves as the catalytic Proton acceptor. The short motif at aspartate 652–glycine 654 is the DGA/G element. The calmodulin-binding (1-9-14 motif) stretch occupies residues arginine 677 to lysine 686. The interval alanine 748–arginine 759 is calmodulin-binding (IQ motif).

As to quaternary structure, homodimer formed by catalytic domains tightly interacting through a large hydrophobic interface. The contact area involves 3 alpha helices, several loops and a part of the beta sheet from each monomer. Both active sites of the dimer are in close proximity adopting an open conformation that provide sufficient space for phospholipid access and favoring cooperativity in deacylation-reacylation reactions. Each monomer has 9 ankyrin repeats stacked side-by-side in an elongated structure oriented outwards from the catalytic core. In terms of tissue distribution, four different transcripts were found to be expressed in a distinct tissue distribution.

The protein resides in the cytoplasm. Its subcellular location is the cell membrane. It localises to the mitochondrion. The protein localises to the cell projection. It is found in the pseudopodium. The enzyme catalyses a 1,2-diacyl-sn-glycero-3-phosphocholine + H2O = a 1-acyl-sn-glycero-3-phosphocholine + a fatty acid + H(+). The catalysed reaction is a 1-O-alkyl-2-acyl-sn-glycero-3-phosphocholine + H2O = a 1-O-alkyl-sn-glycero-3-phosphocholine + a fatty acid + H(+). It catalyses the reaction 1,2-dihexadecanoyl-sn-glycero-3-phosphocholine + H2O = 1-hexadecanoyl-sn-glycero-3-phosphocholine + hexadecanoate + H(+). It carries out the reaction 1-hexadecanoyl-2-(9Z-octadecenoyl)-sn-glycero-3-phosphocholine + H2O = 1-hexadecanoyl-sn-glycero-3-phosphocholine + (9Z)-octadecenoate + H(+). The enzyme catalyses 1-hexadecanoyl-2-(9Z,12Z-octadecadienoyl)-sn-glycero-3-phosphocholine + H2O = (9Z,12Z)-octadecadienoate + 1-hexadecanoyl-sn-glycero-3-phosphocholine + H(+). The catalysed reaction is 1-hexadecanoyl-2-(5Z,8Z,11Z,14Z-eicosatetraenoyl)-sn-glycero-3-phosphocholine + H2O = 1-hexadecanoyl-sn-glycero-3-phosphocholine + (5Z,8Z,11Z,14Z)-eicosatetraenoate + H(+). It catalyses the reaction 1-octadecanoyl-2-(5Z,8Z,11Z,14Z-eicosatetraenoyl)-sn-glycero-3-phosphocholine + H2O = 1-octadecanoyl-sn-glycero-3-phosphocholine + (5Z,8Z,11Z,14Z)-eicosatetraenoate + H(+). It carries out the reaction 1-hexadecanoyl-2-(5Z,8Z,11Z,14Z-eicosatetraenoyl)-sn-glycero-3-phosphoethanolamine + H2O = 1-hexadecanoyl-sn-glycero-3-phosphoethanolamine + (5Z,8Z,11Z,14Z)-eicosatetraenoate + H(+). The enzyme catalyses 1,2-dihexadecanoyl-sn-glycero-3-phosphate + H2O = 1-hexadecanoyl-sn-glycero-3-phosphate + hexadecanoate + H(+). The catalysed reaction is a 1-acyl-sn-glycero-3-phosphocholine + H2O = sn-glycerol 3-phosphocholine + a fatty acid + H(+). It catalyses the reaction 1-hexadecanoyl-sn-glycero-3-phosphocholine + H2O = sn-glycerol 3-phosphocholine + hexadecanoate + H(+). It carries out the reaction 1-(5Z,8Z,11Z,14Z-eicosatetraenoyl)-sn-glycero-3-phosphocholine + H2O = sn-glycerol 3-phosphocholine + (5Z,8Z,11Z,14Z)-eicosatetraenoate + H(+). The enzyme catalyses 2-(5Z,8Z,11Z,14Z)-eicosatetraenoyl-sn-glycero-3-phosphocholine + H2O = sn-glycerol 3-phosphocholine + (5Z,8Z,11Z,14Z)-eicosatetraenoate + H(+). The catalysed reaction is 1-O-hexadecyl-2-(5Z,8Z,11Z,14Z)-eicosatetraenoyl-sn-glycero-3-phosphocholine + H2O = 1-O-hexadecyl-sn-glycero-3-phosphocholine + (5Z,8Z,11Z,14Z)-eicosatetraenoate + H(+). It catalyses the reaction 1-O-hexadecyl-2-acetyl-sn-glycero-3-phosphocholine + H2O = 1-O-hexadecyl-sn-glycero-3-phosphocholine + acetate + H(+). It carries out the reaction hexadecanoyl-CoA + H2O = hexadecanoate + CoA + H(+). The enzyme catalyses 1',3'-bis[1,2-di-(9Z-octadecenoyl)-sn-glycero-3-phospho]-glycerol + H2O = 1'-[1,2-di-(9Z-octadecenoyl)-sn-glycero-3-phospho]-3'-[1-(9Z-octadecenoyl)-sn-glycero-3-phospho]-glycerol + (9Z)-octadecenoate + H(+). The catalysed reaction is 1'-[1,2-di-(9Z-octadecenoyl)-sn-glycero-3-phospho]-3'-[1-(9Z-octadecenoyl)-sn-glycero-3-phospho]-glycerol + H2O = 1',3'-bis-[1-(9Z-octadecenoyl)-sn-glycero-3-phospho]-glycerol + (9Z)-octadecenoate + H(+). It catalyses the reaction 1',3'-bis-[1,2-di-(9Z,12Z-octadecadienoyl)-sn-glycero-3-phospho]-glycerol + H2O = 1'-[1,2-di-(9Z,12Z-octadecadienoyl)-sn-glycero-3-phospho]-3'-[1-(9Z,12Z-octadecadienoyl)-sn-glycero-3-phospho]-glycerol + (9Z,12Z)-octadecadienoate + H(+). It carries out the reaction 1-octadecanoyl-2-(15-hydroxy-(5Z,8Z,11Z,13E)-eicosatetraenoyl)-sn-glycero-3-phosphoethanolamine + H2O = 1-octadecanoyl-sn-glycero-3-phosphoethanolamine + 15-hydroxy-(5Z,8Z,11Z,13E)-eicosatetraenoate + H(+). With respect to regulation, activated by ATP. Inhibited by calcium-activated calmodulin. Inhibited by bromoenol lactone (BEL). Functionally, calcium-independent phospholipase involved in phospholipid remodeling with implications in cellular membrane homeostasis, mitochondrial integrity and signal transduction. Hydrolyzes the ester bond of the fatty acyl group attached at sn-1 or sn-2 position of phospholipids (phospholipase A1 and A2 activity respectively), producing lysophospholipids that are used in deacylation-reacylation cycles. Hydrolyzes both saturated and unsaturated long fatty acyl chains in various glycerophospholipid classes such as phosphatidylcholines, phosphatidylethanolamines and phosphatidates, with a preference for hydrolysis at sn-2 position. Can further hydrolyze lysophospholipids carrying saturated fatty acyl chains (lysophospholipase activity). Upon oxidative stress, contributes to remodeling of mitochondrial phospholipids in pancreatic beta cells, in a repair mechanism to reduce oxidized lipid content. Preferentially hydrolyzes oxidized polyunsaturated fatty acyl chains from cardiolipins, yielding monolysocardiolipins that can be reacylated with unoxidized fatty acyls to regenerate native cardiolipin species. Hydrolyzes oxidized glycerophosphoethanolamines present in pancreatic islets, releasing oxidized polyunsaturated fatty acids such as hydroxyeicosatetraenoates (HETEs). Has thioesterase activity toward fatty-acyl CoA releasing CoA-SH known to facilitate fatty acid transport and beta-oxidation in mitochondria particularly in skeletal muscle. Plays a role in regulation of membrane dynamics and homeostasis. Selectively hydrolyzes sn-2 arachidonoyl group in plasmalogen phospholipids, structural components of lipid rafts and myelin. Regulates F-actin polymerization at the pseudopods, which is required for both speed and directionality of MCP1/CCL2-induced monocyte chemotaxis. Targets membrane phospholipids to produce potent lipid signaling messengers. Generates lysophosphatidate (LPA, 1-acyl-glycerol-3-phosphate), which acts via G-protein receptors in various cell types. Has phospholipase A2 activity toward platelet-activating factor (PAF, 1-O-alkyl-2-acetyl-sn-glycero-3-phosphocholine), likely playing a role in inactivation of this potent pro-inflammatory signaling lipid. In response to glucose, amplifies calcium influx in pancreatic beta cells to promote INS secretion. Lacks the catalytic domain and may act as a negative regulator of the catalytically active isoforms. The chain is 85/88 kDa calcium-independent phospholipase A2 (PLA2G6) from Homo sapiens (Human).